The following is a 344-amino-acid chain: Beta-1,4-galactosyltransferase 4 (344 aa).

Residues 1–12 (MGCNPPYLLPYR) are Cytoplasmic-facing. A helical; Signal-anchor for type II membrane protein membrane pass occupies residues 13–38 (LRLLLFFTLCLTVVGWVTSNYFVDPI). The Lumenal segment spans residues 39 to 344 (QVIPKAKVFM…NITVDFWTGV (306 aa)). An intrachain disulfide couples Cys-77 to Cys-118. Residues 129–133 (PHRNR), 168–170 (FNR), and 195–196 (VD) each bind UDP-alpha-D-galactose. Cys-189 and Cys-208 form a disulfide bridge. Asp-196 is a binding site for Mn(2+). An N-linked (GlcNAc...) asparagine glycan is attached at Asn-220. 2 residues coordinate UDP-alpha-D-galactose: Tyr-224 and Trp-256. 258 to 261 (GEDD) provides a ligand contact to N-acetyl-D-glucosamine. His-289 is a binding site for Mn(2+). 289-291 (HTR) contacts UDP-alpha-D-galactose. Residue Arg-301 participates in N-acetyl-D-glucosamine binding. N-linked (GlcNAc...) asparagine glycosylation is present at Asn-335.

This sequence belongs to the glycosyltransferase 7 family. Mn(2+) is required as a cofactor.

The protein localises to the golgi apparatus. The protein resides in the golgi stack membrane. The catalysed reaction is N-acetyl-D-glucosamine + UDP-alpha-D-galactose = beta-D-galactosyl-(1-&gt;4)-N-acetyl-D-glucosamine + UDP + H(+). The enzyme catalyses a beta-D-GlcNAc-(1-&gt;3)-beta-D-Gal-(1-&gt;4)-beta-D-Glc-(1&lt;-&gt;1)-Cer(d18:1(4E)) + UDP-alpha-D-galactose = a neolactoside nLc4Cer(d18:1(4E)) + UDP + H(+). The protein operates within protein modification; protein glycosylation. In terms of biological role, galactose (Gal) transferase involved in the biosynthesis of glycoproteins, proteoglycans, and glycosyphingolipids. Catalyzes the transfer of Gal residue via a beta1-&gt;4 linkage from UDP-Gal to the non-reducing terminal N-acetyl glucosamine 6-O-sulfate (6-O-sulfoGlcNAc) in the linearly growing chain of both N- and O-linked keratan sulfate proteoglycans. Cooperates with B3GNT7 N-acetyl glucosamine transferase and CHST6 and CHST1 sulfotransferases to construct and elongate mono- and disulfated disaccharide units [-&gt;3Galbeta1-&gt;4(6-sulfoGlcNAcbeta)1-&gt;] and [-&gt;3(6-sulfoGalbeta)1-&gt;4(6-sulfoGlcNAcbeta)1-&gt;] within keratan sulfate polymer. The sequence is that of Beta-1,4-galactosyltransferase 4 (B4GALT4) from Cricetulus griseus (Chinese hamster).